Reading from the N-terminus, the 396-residue chain is Tyrosine--tRNA ligase (396 aa).

Residues 43-52 (PTAPDIHLGH) carry the 'HIGH' region motif. Residues 227-231 (KMSKS) carry the 'KMSKS' region motif. K230 is an ATP binding site. Residues 335-395 (IGLATLLKEA…GKRKFARVTV (61 aa)) form the S4 RNA-binding domain.

It belongs to the class-I aminoacyl-tRNA synthetase family. TyrS type 2 subfamily. Homodimer.

The protein localises to the cytoplasm. It carries out the reaction tRNA(Tyr) + L-tyrosine + ATP = L-tyrosyl-tRNA(Tyr) + AMP + diphosphate + H(+). In terms of biological role, catalyzes the attachment of tyrosine to tRNA(Tyr) in a two-step reaction: tyrosine is first activated by ATP to form Tyr-AMP and then transferred to the acceptor end of tRNA(Tyr). This Haemophilus ducreyi (strain 35000HP / ATCC 700724) protein is Tyrosine--tRNA ligase.